A 351-amino-acid chain; its full sequence is Protein RecA (351 aa).

An ATP-binding site is contributed by 73–80 (GPESSGKT).

Belongs to the RecA family.

It is found in the cytoplasm. Can catalyze the hydrolysis of ATP in the presence of single-stranded DNA, the ATP-dependent uptake of single-stranded DNA by duplex DNA, and the ATP-dependent hybridization of homologous single-stranded DNAs. It interacts with LexA causing its activation and leading to its autocatalytic cleavage. In Oleidesulfovibrio alaskensis (strain ATCC BAA-1058 / DSM 17464 / G20) (Desulfovibrio alaskensis), this protein is Protein RecA.